A 193-amino-acid chain; its full sequence is Ion-translocating oxidoreductase complex subunit B (193 aa).

Residues 1–26 form a hydrophobic region; that stretch reads MSTMLIAVILLTLLALFFGVLLGFAA. Residues 32 to 90 form the 4Fe-4S domain; sequence EGNPIVDELEAILPQTQCGQCGYPGCRPYAEAIANGDKVNKCPPGGTATMEKLASLMGV. Residues cysteine 49, cysteine 52, cysteine 57, cysteine 73, cysteine 114, cysteine 117, cysteine 120, cysteine 124, cysteine 144, cysteine 147, cysteine 150, and cysteine 154 each contribute to the [4Fe-4S] cluster site. 4Fe-4S ferredoxin-type domains follow at residues 105 to 134 and 136 to 164; these read KVAY…GAGK and MHTV…MVPV.

The protein belongs to the 4Fe4S bacterial-type ferredoxin family. RnfB subfamily. In terms of assembly, the complex is composed of six subunits: RnfA, RnfB, RnfC, RnfD, RnfE and RnfG. It depends on [4Fe-4S] cluster as a cofactor.

The protein localises to the cell inner membrane. Part of a membrane-bound complex that couples electron transfer with translocation of ions across the membrane. This chain is Ion-translocating oxidoreductase complex subunit B, found in Shewanella oneidensis (strain ATCC 700550 / JCM 31522 / CIP 106686 / LMG 19005 / NCIMB 14063 / MR-1).